A 702-amino-acid chain; its full sequence is NAD(P)H-quinone oxidoreductase subunit 5, chloroplastic (702 aa).

15 consecutive transmembrane segments (helical) span residues 1-21 (WVIP…LFFI), 31-51 (IWAF…VHLS), 81-101 (IDPL…LVLI), 117-137 (FVYI…SNLI), 139-159 (IYFF…FWFT), 177-197 (GDFG…SLEF), 211-231 (NGIN…GAVA), 250-270 (TPIS…FLLA), 272-292 (LFPL…VGTI), 319-339 (LGYM…FHLI), 346-366 (ALLF…VGYS), 388-408 (TTFL…CFWS), 417-437 (WLYS…TAFY), 534-554 (LFPL…GISF), and 602-622 (SLAI…YSFF).

Belongs to the complex I subunit 5 family. In terms of assembly, NDH is composed of at least 16 different subunits, 5 of which are encoded in the nucleus.

The protein resides in the plastid. The protein localises to the chloroplast thylakoid membrane. It catalyses the reaction a plastoquinone + NADH + (n+1) H(+)(in) = a plastoquinol + NAD(+) + n H(+)(out). The catalysed reaction is a plastoquinone + NADPH + (n+1) H(+)(in) = a plastoquinol + NADP(+) + n H(+)(out). NDH shuttles electrons from NAD(P)H:plastoquinone, via FMN and iron-sulfur (Fe-S) centers, to quinones in the photosynthetic chain and possibly in a chloroplast respiratory chain. The immediate electron acceptor for the enzyme in this species is believed to be plastoquinone. Couples the redox reaction to proton translocation, and thus conserves the redox energy in a proton gradient. In Poa pratensis (Kentucky bluegrass), this protein is NAD(P)H-quinone oxidoreductase subunit 5, chloroplastic (ndhF).